The following is a 100-amino-acid chain: Urease subunit gamma (100 aa).

This sequence belongs to the urease gamma subunit family. As to quaternary structure, heterotrimer of UreA (gamma), UreB (beta) and UreC (alpha) subunits. Three heterotrimers associate to form the active enzyme.

The protein localises to the cytoplasm. It carries out the reaction urea + 2 H2O + H(+) = hydrogencarbonate + 2 NH4(+). It functions in the pathway nitrogen metabolism; urea degradation; CO(2) and NH(3) from urea (urease route): step 1/1. In Ralstonia pickettii (strain 12J), this protein is Urease subunit gamma.